The chain runs to 234 residues: Enolase-phosphatase E1 (234 aa).

Residues aspartate 10 and glutamate 12 each coordinate Mg(2+). Residues 125–126 and lysine 162 each bind substrate; that span reads SS. Aspartate 188 lines the Mg(2+) pocket.

It belongs to the HAD-like hydrolase superfamily. MasA/MtnC family. As to quaternary structure, monomer. The cofactor is Mg(2+).

It is found in the cytoplasm. It localises to the nucleus. It catalyses the reaction 5-methylsulfanyl-2,3-dioxopentyl phosphate + H2O = 1,2-dihydroxy-5-(methylsulfanyl)pent-1-en-3-one + phosphate. Its pathway is amino-acid biosynthesis; L-methionine biosynthesis via salvage pathway; L-methionine from S-methyl-5-thio-alpha-D-ribose 1-phosphate: step 3/6. It functions in the pathway amino-acid biosynthesis; L-methionine biosynthesis via salvage pathway; L-methionine from S-methyl-5-thio-alpha-D-ribose 1-phosphate: step 4/6. In terms of biological role, bifunctional enzyme that catalyzes the enolization of 2,3-diketo-5-methylthiopentyl-1-phosphate (DK-MTP-1-P) into the intermediate 2-hydroxy-3-keto-5-methylthiopentenyl-1-phosphate (HK-MTPenyl-1-P), which is then dephosphorylated to form the acireductone 1,2-dihydroxy-3-keto-5-methylthiopentene (DHK-MTPene). The polypeptide is Enolase-phosphatase E1 (utr4) (Neurospora crassa (strain ATCC 24698 / 74-OR23-1A / CBS 708.71 / DSM 1257 / FGSC 987)).